The chain runs to 285 residues: 4-diphosphocytidyl-2-C-methyl-D-erythritol kinase (285 aa).

Residue K10 is part of the active site. 93-103 (PIGGGLGGGSS) is a binding site for ATP. Residue D135 is part of the active site.

It belongs to the GHMP kinase family. IspE subfamily.

The enzyme catalyses 4-CDP-2-C-methyl-D-erythritol + ATP = 4-CDP-2-C-methyl-D-erythritol 2-phosphate + ADP + H(+). It functions in the pathway isoprenoid biosynthesis; isopentenyl diphosphate biosynthesis via DXP pathway; isopentenyl diphosphate from 1-deoxy-D-xylulose 5-phosphate: step 3/6. Its function is as follows. Catalyzes the phosphorylation of the position 2 hydroxy group of 4-diphosphocytidyl-2C-methyl-D-erythritol. The chain is 4-diphosphocytidyl-2-C-methyl-D-erythritol kinase from Vesicomyosocius okutanii subsp. Calyptogena okutanii (strain HA).